The chain runs to 86 residues: MAIKLINIGFGNIVNANRIISIVSPESAPIKRIIQEARDRNMLVDATYGRRTRAVIITDSDHVILSAVQPETVAQRLTTKDDESDE.

It belongs to the RemA family.

In Brevibacillus brevis (strain 47 / JCM 6285 / NBRC 100599), this protein is Putative regulatory protein BBR47_37350.